The primary structure comprises 732 residues: Ets DNA-binding protein pokkuri (732 aa).

Positions serine 33 to serine 117 constitute a PNT domain. The tract at residues serine 133–isoleucine 295 is disordered. Positions serine 141–asparagine 157 are enriched in pro residues. Residues asparagine 176–proline 193 show a composition bias toward polar residues. The span at glycine 205–serine 240 shows a compositional bias: low complexity. A DNA-binding region (ETS) is located at residues arginine 396–leucine 479. 3 disordered regions span residues glutamine 496 to methionine 548, glycine 590 to serine 647, and valine 674 to glutamine 732. Positions serine 506–glutamine 539 are enriched in low complexity. Position 543 is a phosphoserine (serine 543). A compositionally biased stretch (polar residues) spans leucine 637–serine 647. Phosphoserine is present on residues serine 677, serine 682, and serine 696. The span at alanine 690–alanine 709 shows a compositional bias: polar residues.

Belongs to the ETS family. Post-translationally, phosphorylated in response to MAPK signaling. May be phosphorylated by rl. As to expression, expressed in R7 and cone cells of the eye.

The protein localises to the nucleus. In terms of biological role, ets-related protein that functions as a negative regulator of photoreceptor development acting antagonistically to pnt and the proneural signal mediated by RAS. It acts upstream of SINA to inhibit R7 development. In Drosophila melanogaster (Fruit fly), this protein is Ets DNA-binding protein pokkuri (aop).